Here is a 78-residue protein sequence, read N- to C-terminus: uncharacterized protein (78 aa).

This is an uncharacterized protein from Ureaplasma parvum serovar 3 (strain ATCC 700970).